The chain runs to 316 residues: MENFPIINLENLNGDERAKTMEMIKDACENWGFFELVNHGIPHEVMDTVEKLTKGHYKKCMEQRFKELVASKGLEAVQAEVTDLDWESTFFLRHLPTSNISQVPDLDEEYREVMRDFAKRLEKLAEELLDLLCENLGLEKGYLKNAFYGSKGPNFGTKVSNYPPCPKPDLIKGLRAHTDAGGIILLFQDDKVSGLQLLKDEQWIDVPPMRHSIVVNLGDQLEVITNGKYKSVMHRVIAQTDGTRMSLASFYNPGNDAVIYPAPSLIEESKQVYPKFVFDDYMKLYAGLKFQPKEPRFEAMKAMEANVELVDQIASA.

In terms of domain architecture, Fe2OG dioxygenase spans 153-253 (PNFGTKVSNY…RMSLASFYNP (101 aa)). Fe cation-binding residues include His-177, Asp-179, and His-234.

Belongs to the iron/ascorbate-dependent oxidoreductase family. Fe cation is required as a cofactor. As to expression, expressed in all of the floral organs examined apart from the sepals.

It catalyses the reaction 1-aminocyclopropane-1-carboxylate + L-ascorbate + O2 = ethene + L-dehydroascorbate + hydrogen cyanide + CO2 + 2 H2O. It functions in the pathway alkene biosynthesis; ethylene biosynthesis via S-adenosyl-L-methionine; ethylene from S-adenosyl-L-methionine: step 2/2. The protein is 1-aminocyclopropane-1-carboxylate oxidase 4 (ACO4) of Solanum lycopersicum (Tomato).